A 418-amino-acid polypeptide reads, in one-letter code: Sterigmatocystin 8-O-methyltransferase (418 aa).

A propeptide spanning residues 1-41 (MALPSKAALVGLANTLSEQVKRYLATAGETKSPEDHKLCIE) is cleaved from the precursor. Residue 170-176 (MRSGASF) participates in substrate binding. Residues 206–225 (LFDYYSTVDEVRGRRFDLGM) form a substrate binding region. Residues 254 to 255 (GG), Asp277, 297 to 298 (DI), and Arg313 each bind S-adenosyl-L-methionine. The Proton acceptor role is filled by His317.

Belongs to the class I-like SAM-binding methyltransferase superfamily. Cation-independent O-methyltransferase family. COMT subfamily.

The protein resides in the cytoplasm. Its subcellular location is the vacuole. It carries out the reaction sterigmatocystin + S-adenosyl-L-methionine = 8-O-methylsterigmatocystin + S-adenosyl-L-homocysteine + H(+). The enzyme catalyses dihydrosterigmatocystin + S-adenosyl-L-methionine = 8-O-methyldihydrosterigmatocystin + S-adenosyl-L-homocysteine + H(+). Its pathway is mycotoxin biosynthesis; aflatoxin biosynthesis. Sterigmatocystin 8-O-methyltransferase; part of the gene cluster that mediates the biosynthesis of aflatoxins, a group of polyketide-derived furanocoumarins, and part of the most toxic and carcinogenic compounds among the known mycotoxins. The four major aflatoxins produced by A.parasiticus are aflatoxin B1 (AFB1), aflatoxin B2 (AFB2), aflatoxin G1 (AFG1) and aflatoxin G2 (AFG2). Within the aflatoxin pathway, the O-methyltransferase aflP uses both sterigmatocystin (ST) and dihydrosterigmatocystin (DHST) as substrates to yield O-methylsterigmatocystin (OMST) and dihydro-O-methylsterigmatocystin (DHOMST), respectively. The biosynthesis of aflatoxins begins with the norsolorinic acid synthase aflC that combines a hexanoyl starter unit produced by the fatty acid synthase aflA/aflB and 7 malonyl-CoA extender units to synthesize the precursor NOR. The second step is the conversion of NOR to averantin and requires the norsolorinic acid ketoreductase aflD, which catalyzes the dehydration of norsolorinic acid to form (1'S)-averantin. The norsolorinic acid reductases aflE and aflF may also play a role in the conversion of NOR to AVN. The cytochrome P450 monooxygenase aflG then catalyzes the hydroxylation of AVN to 5'hydroxyaverantin (HAVN). The next step is performed by the 5'-hydroxyaverantin dehydrogenase aflH that transforms HAVN to 5'-oxoaverantin (OAVN) which is further converted to averufin (AVF) by aflK that plays a dual role in the pathway, as a 5'-oxoaverantin cyclase that mediates conversion of 5'-oxoaverantin, as well as a versicolorin B synthase in a later step in the pathway. The averufin oxidase aflI catalyzes the conversion of AVF to versiconal hemiacetal acetate (VHA). VHA is then the substrate for the versiconal hemiacetal acetate esterase aflJ to yield versiconal (VAL). Versicolorin B synthase aflK then converts VAL to versicolorin B (VERB) by closing the bisfuran ring of aflatoxin which is required for DNA-binding, thus giving to aflatoxin its activity as a mutagen. Then, the activity of the versicolorin B desaturase aflL leads to versicolorin A (VERA). A branch point starts from VERB since it can also be converted to dihydrodemethylsterigmatocystin (DMDHST), probably also by aflL, VERA being a precursor for aflatoxins B1 and G1, and DMDHST for aflatoxins B2 and G2. Next, the versicolorin reductase aflM and the cytochrome P450 monooxygenase aflN are involved in conversion of VERA to demethylsterigmatocystin (DMST). AflX and aflY seem also involved in this step, through probable aflX-mediated epoxide ring-opening step following versicolorin A oxidation and aflY-mediated Baeyer-Villiger oxidation required for the formation of the xanthone ring. The methyltransferase aflO then leads to the modification of DMST to sterigmatocystin (ST), and of DMDHST to dihydrosterigmatocystin (DHST). Both ST and DHST are then substrates of the O-methyltransferase aflP to yield O-methylsterigmatocystin (OMST) and dihydro-O-methylsterigmatocystin (DHOMST), respectively. Finally OMST is converted to aflatoxins B1 and G1, and DHOMST to aflatoxins B2 and G2, via the action of several enzymes including O-methylsterigmatocystin oxidoreductase aflQ, the cytochrome P450 monooxygenase aflU, but also the NADH-dependent flavin oxidoreductase nadA which is specifically required for the synthesis of AFG1. The polypeptide is Sterigmatocystin 8-O-methyltransferase (Aspergillus parasiticus (strain ATCC 56775 / NRRL 5862 / SRRC 143 / SU-1)).